Reading from the N-terminus, the 42-residue chain is Kappa-actitoxin-Ael2a (42 aa).

3 cysteine pairs are disulfide-bonded: Cys4–Cys37, Cys6–Cys30, and Cys20–Cys38.

It belongs to the sea anemone type 3 (BDS) potassium channel toxin family.

Its subcellular location is the secreted. It localises to the nematocyst. Functionally, peptide with both antimicrobial and neurotoxin activities. This toxin acts both on ERG potassium channels and sodium channels. It potently and reversibly inhibits human Kv11.1/KCNH2/ERG1 (IC(50)=34 nM), rat Kv11.1/KCNH2/ERG1 and Kv11.3/KCNH7/ERG3 voltage-gated potassium channels in a similar potency. It acts as a gating-modifier toxin that shifts the voltage-dependence of ERG activation in the positive direction and suppresses its current amplitudes elicited by strong depolarizing pulses. On sodium channels, it blocks Nav1.2/SCN2A (EC(50)=31 nM), Nav1.3/SCN3A, Nav1.4/SCN4A, Nav1.5/SCN5A, Nav1.6/SCN8A, Nav1.8/SCN10A (EC(50)=92 nM). It may act by binding at site 1 or close by, only when the pore is in an open configuration. Shows antibacterial activity against the Gram-negative bacterium S.typhimurium, but not on the bacteria B.subtilis, S.aureus, and P.aeruginosa. In vivo, this toxin does not induce neurotoxic symptoms when injected into mice. This Anthopleura elegantissima (Green aggregating anemone) protein is Kappa-actitoxin-Ael2a.